Here is a 150-residue protein sequence, read N- to C-terminus: SsrA-binding protein (150 aa).

This sequence belongs to the SmpB family.

The protein resides in the cytoplasm. Its function is as follows. Required for rescue of stalled ribosomes mediated by trans-translation. Binds to transfer-messenger RNA (tmRNA), required for stable association of tmRNA with ribosomes. tmRNA and SmpB together mimic tRNA shape, replacing the anticodon stem-loop with SmpB. tmRNA is encoded by the ssrA gene; the 2 termini fold to resemble tRNA(Ala) and it encodes a 'tag peptide', a short internal open reading frame. During trans-translation Ala-aminoacylated tmRNA acts like a tRNA, entering the A-site of stalled ribosomes, displacing the stalled mRNA. The ribosome then switches to translate the ORF on the tmRNA; the nascent peptide is terminated with the 'tag peptide' encoded by the tmRNA and targeted for degradation. The ribosome is freed to recommence translation, which seems to be the essential function of trans-translation. The protein is SsrA-binding protein of Chlamydia caviae (strain ATCC VR-813 / DSM 19441 / 03DC25 / GPIC) (Chlamydophila caviae).